Reading from the N-terminus, the 185-residue chain is Putative RNA (cytidine(34)-2'-O)-methyltransferase (185 aa).

The S-adenosyl-L-methionine site is built by Ile-80, Gly-105, and Ile-126.

The protein belongs to the class IV-like SAM-binding methyltransferase superfamily. RNA methyltransferase TrmH family. TrmL subfamily.

Its subcellular location is the cytoplasm. The enzyme catalyses cytidine(34) in tRNA + S-adenosyl-L-methionine = 2'-O-methylcytidine(34) in tRNA + S-adenosyl-L-homocysteine + H(+). The catalysed reaction is 5-carboxymethylaminomethyluridine(34) in tRNA(Leu) + S-adenosyl-L-methionine = 5-carboxymethylaminomethyl-2'-O-methyluridine(34) in tRNA(Leu) + S-adenosyl-L-homocysteine + H(+). Its function is as follows. Could methylate the ribose at the nucleotide 34 wobble position in tRNA. This chain is Putative RNA (cytidine(34)-2'-O)-methyltransferase, found in Lactobacillus gasseri (strain ATCC 33323 / DSM 20243 / BCRC 14619 / CIP 102991 / JCM 1131 / KCTC 3163 / NCIMB 11718 / NCTC 13722 / AM63).